The chain runs to 350 residues: tRNA uridine(34) hydroxylase (350 aa).

The 95-residue stretch at 146–240 (DDPDAVFIDM…YARRARAQGL (95 aa)) folds into the Rhodanese domain. C200 (cysteine persulfide intermediate) is an active-site residue. Residues 319–328 (RRRRAGRENG) are compositionally biased toward basic and acidic residues. A disordered region spans residues 319 to 350 (RRRRAGRENGNKIFNKSRGRLNSKLSIPDPAE).

It belongs to the TrhO family.

The catalysed reaction is uridine(34) in tRNA + AH2 + O2 = 5-hydroxyuridine(34) in tRNA + A + H2O. Functionally, catalyzes oxygen-dependent 5-hydroxyuridine (ho5U) modification at position 34 in tRNAs. The protein is tRNA uridine(34) hydroxylase of Salmonella paratyphi B (strain ATCC BAA-1250 / SPB7).